The chain runs to 248 residues: Mannose-binding protein C (248 aa).

An N-terminal signal peptide occupies residues 1-20 (MSLIPSLSLLLMSMVAASYS). The Collagen-like domain maps to 42–99 (GINGFPGKDGRDGTKGEKGEPGQGLRGLQGPPGKLGPPGNPGPSGSPGPKGQKGDPGN). A disordered region spans residues 43–110 (INGFPGKDGR…PDCDSSLAVS (68 aa)). Pro-47 is modified (4-hydroxyproline). A compositionally biased stretch (basic and acidic residues) spans 49–61 (KDGRDGTKGEKGE). 4-hydroxyproline is present on residues Pro-73, Pro-79, Pro-82, and Pro-88. Over residues 75-87 (KLGPPGNPGPSGS) the composition is skewed to pro residues. Residues 112 to 130 (RKALQTEMARIKKWLTFSL) adopt a coiled-coil conformation. The 112-residue stretch at 134–245 (VGNKFFLTNG…CSSSHLAVCE (112 aa)) folds into the C-type lectin domain. 2 cysteine pairs are disulfide-bonded: Cys-155-Cys-244 and Cys-222-Cys-236.

As to quaternary structure, oligomeric complex of 3 or more homotrimers. Interacts with MASP1 and MASP2. Interacts with MEP1A and MEP1B and may inhibit their catalytic activity. Post-translationally, hydroxylation on proline residues within the sequence motif, GXPG, is most likely to be 4-hydroxy as this fits the requirement for 4-hydroxylation in vertebrates.

It localises to the secreted. Its function is as follows. Calcium-dependent lectin involved in innate immune defense. Binds mannose, fucose and N-acetylglucosamine on different microorganisms and activates the lectin complement pathway. Binds to late apoptotic cells, as well as to apoptotic blebs and to necrotic cells, but not to early apoptotic cells, facilitating their uptake by macrophages. This chain is Mannose-binding protein C (MBL2), found in Nomascus concolor (Black crested gibbon).